A 1052-amino-acid polypeptide reads, in one-letter code: MPPPPHIKPENVLKRAQELIAVGQAPAALNVLHEHVTSKRTRSSPIASLEPVMLLFVELCVDLRKGKAAKDGLYQYKNIAQNTNVGTIEVVLKKFIELAEKKVTEAQAKADEIQSSLESAAPSSNVDDLEAIETPETILLATVSGEQSRDRTDRAVVTPWLKFLWETYRTVLEILKNNARLEVMYQTTALQAFQFCLKYTRKTEFRRLCELLRNHVQNAAKYSAQMHAINLSDPDTLQRHLDTRFQQLNVAVELELWQEAFRSIEDIHTLLSLSKRPAKNVMMANYYEKLARIFLVSENYLFHAAAFSRYYNLLRQSAAALAAGQGTKKENPSVTEADMTKAASFVLLSALSIPVISTSRSRGALVDVDEVRKNKNTRLTNLLGMASPPTRAVLFKDALNKGLLKRARPEIRDLYNILEVDFHPLSICKKITPILKQIGADPEMEKYVLPLQQVILTRLFQQLSQVYESVELKFVYELAQFPDPFQITPSMIEKFIMNGCKKGDLAIRVDHISGVLTFDTDVFSSAKALHPGSAAGSAESEVGSVQRLQNTPAEIARLQLTRLAKTLHVTCMYVDPSYNEARLQAKRAALARAEAGAAKEHEETLARRVIIEKKKEAATDALQRKQREEETRKRIRTQQLQEAEKQRLLDEHREREKKRIKDEQDRIRQQELKKQLEELKTGVKGIDISELDLNELDANRLRAMKLAQLEKEKNELNDRIRTTAKRIDHLERAFRREELKHVPEDYEKQKQRDMEIYEATKAEALKEAEDKHKEAVALKHRLSRLVPQFNSFRKEVSEKRHEEFEKRRKAAERDFEAKKMQRIKEVQERRRRERAEREEEERRRKEEEERIRREEEERTAKEEERRRVLAEEKAKREEERKRLDELAAKQKQREEEAEARRAARRTGGAEPEAAPERAAPTERTAPRLNLAPRTGGAGPSWRERQAAKEAAGGTPAAPAAAAPEPAREEPAPVRRTGGYVPPHLRSGASATPAAPAPAPSTERYVPRAMREAGSSQPPSRTQTPGSSSDKPEESKPAAGKWVPRWKQQQGGQ.

Residues 92 to 121 adopt a coiled-coil conformation; that stretch reads LKKFIELAEKKVTEAQAKADEIQSSLESAA. One can recognise a PCI domain in the interval 339–523; the sequence is MTKAASFVLL…GVLTFDTDVF (185 aa). Residues 580 to 906 are a coiled coil; that stretch reads EARLQAKRAA…AEARRAARRT (327 aa). Composition is skewed to basic and acidic residues over residues 617-632 and 794-901; these read AATD…EETR and KEVS…EARR. Disordered stretches follow at residues 617 to 646 and 794 to 1052; these read AATD…AEKQ and KEVS…QGGQ. Low complexity-rich tracts occupy residues 905 to 927 and 948 to 964; these read RTGG…TAPR and KEAA…AAPE. Residues 1013–1028 are compositionally biased toward polar residues; it reads GSSQPPSRTQTPGSSS.

This sequence belongs to the eIF-3 subunit A family. Component of the eukaryotic translation initiation factor 3 (eIF-3) complex.

Its subcellular location is the cytoplasm. RNA-binding component of the eukaryotic translation initiation factor 3 (eIF-3) complex, which is involved in protein synthesis of a specialized repertoire of mRNAs and, together with other initiation factors, stimulates binding of mRNA and methionyl-tRNAi to the 40S ribosome. The eIF-3 complex specifically targets and initiates translation of a subset of mRNAs involved in cell proliferation. This chain is Eukaryotic translation initiation factor 3 subunit A (tif32), found in Aspergillus niger (strain ATCC MYA-4892 / CBS 513.88 / FGSC A1513).